Consider the following 221-residue polypeptide: GTP cyclohydrolase III (221 aa).

The protein belongs to the archaeal-type GTP cyclohydrolase family.

The catalysed reaction is GTP + 3 H2O = 2-amino-5-formylamino-6-(5-phospho-D-ribosylamino)pyrimidin-4(3H)-one + 2 phosphate + 2 H(+). Catalyzes the formation of 2-amino-5-formylamino-6-ribofuranosylamino-4(3H)-pyrimidinone ribonucleotide monophosphate and inorganic phosphate from GTP. Also has an independent pyrophosphate phosphohydrolase activity. In Pyrobaculum arsenaticum (strain DSM 13514 / JCM 11321 / PZ6), this protein is GTP cyclohydrolase III.